The sequence spans 121 residues: Class I hydrophobin 2 (121 aa).

The first 18 residues, 1–18, serve as a signal peptide directing secretion; sequence MQFTTIVMTLAAAVAVTA. Disulfide bonds link C52/C101, C60/C94, C61/C79, and C102/C116. N83 carries N-linked (GlcNAc...) asparagine glycosylation.

Belongs to the fungal hydrophobin family. As to quaternary structure, self-assembles to form functional amyloid fibrils called rodlets. Self-assembly into fibrillar rodlets occurs spontaneously at hydrophobic:hydrophilic interfaces and the rodlets further associate laterally to form amphipathic monolayers. Expressed in conidia and aerial hyphae.

The protein localises to the secreted. Its subcellular location is the cell wall. Functionally, aerial growth, conidiation, and dispersal of filamentous fungi in the environment rely upon a capability of their secreting small amphipathic proteins called hydrophobins (HPBs) with low sequence identity. Class I can self-assemble into an outermost layer of rodlet bundles on aerial cell surfaces, conferring cellular hydrophobicity that supports fungal growth, development and dispersal; whereas Class II form highly ordered films at water-air interfaces through intermolecular interactions but contribute nothing to the rodlet structure. Hcf-2 is a class I hydrophobin that is not necessary for the development of hyphae or conidia but contributes to cell surface hydrophobicity. This chain is Class I hydrophobin 2, found in Passalora fulva (Tomato leaf mold).